Reading from the N-terminus, the 266-residue chain is uncharacterized protein (266 aa).

Positions 1-22 (MGYLKRLVLYIVIMVMSVFIIG) are cleaved as a signal peptide. Cys23 carries N-palmitoyl cysteine lipidation. Cys23 is lipidated: S-diacylglycerol cysteine.

Belongs to the staphylococcal tandem lipoprotein family.

It localises to the cell membrane. This is an uncharacterized protein from Staphylococcus aureus (strain USA300).